The primary structure comprises 920 residues: Probable transport protein MmpL7 (920 aa).

The next 12 helical transmembrane spans lie at L44–T64, I210–L230, A241–V261, V271–L291, L311–A331, L344–A364, S389–M409, L761–M781, A790–W810, V822–I842, G864–S884, and F888–V908.

Belongs to the resistance-nodulation-cell division (RND) (TC 2.A.6) family. MmpL subfamily.

The protein resides in the cell membrane. The chain is Probable transport protein MmpL7 (mmpL7) from Mycobacterium bovis (strain ATCC BAA-935 / AF2122/97).